Here is a 526-residue protein sequence, read N- to C-terminus: Glucose-6-phosphate 1-dehydrogenase (526 aa).

Residues 50–57, arginine 84, and lysine 184 contribute to the NADP(+) site; that span reads GASGDLAK. D-glucose 6-phosphate-binding positions include lysine 184, 214 to 218, glutamate 252, and aspartate 271; that span reads HYLGK. The active-site Proton acceptor is the histidine 276. Arginine 370 is a binding site for NADP(+). Residues lysine 373 and arginine 378 each coordinate D-glucose 6-phosphate. Residues lysine 379, arginine 383, and arginine 406 each coordinate NADP(+). Residue glutamine 408 participates in D-glucose 6-phosphate binding. Residues 414–416, 434–436, arginine 500, tyrosine 516, and tryptophan 522 contribute to the NADP(+) site; these read YFK and DLT.

This sequence belongs to the glucose-6-phosphate dehydrogenase family.

It localises to the cytoplasm. Its subcellular location is the cytosol. It carries out the reaction D-glucose 6-phosphate + NADP(+) = 6-phospho-D-glucono-1,5-lactone + NADPH + H(+). It functions in the pathway carbohydrate degradation; pentose phosphate pathway; D-ribulose 5-phosphate from D-glucose 6-phosphate (oxidative stage): step 1/3. In terms of biological role, cytosolic glucose-6-phosphate dehydrogenase that catalyzes the first and rate-limiting step of the oxidative branch within the pentose phosphate pathway/shunt, an alternative route to glycolysis for the dissimilation of carbohydrates and a major source of reducing power and metabolic intermediates for fatty acid and nucleic acid biosynthetic processes. The protein is Glucose-6-phosphate 1-dehydrogenase (ZW) of Ceratitis capitata (Mediterranean fruit fly).